Reading from the N-terminus, the 470-residue chain is Calcium-binding and coiled-coil domain-containing protein 2 (470 aa).

The short motif at 131 to 134 (ILLV) is the CLIR element. A coiled-coil region spans residues 132–368 (LLVTTEEEAQ…QMEDLSYTLE (237 aa)). The LIR-like motif lies at 201–204 (QQNQ). The UBZ1-type zinc-finger motif lies at 441–464 (QMQCPECGSEFENFQVFQDHIFCH). Zn(2+)-binding residues include Cys444, Cys447, His460, and His464.

Belongs to the CALCOCO family.

It is found in the cytoplasm. The protein resides in the perinuclear region. It localises to the cytoskeleton. The protein localises to the cytoplasmic vesicle. Its subcellular location is the autophagosome membrane. In terms of biological role, xenophagy-specific receptor required for autophagy-mediated intracellular bacteria degradation. Acts as an effector protein of galectin-sensed membrane damage that restricts the proliferation of infecting pathogens upon entry into the cytosol by targeting galectin-associated bacteria for autophagy. Initially orchestrates bacteria targeting to autophagosomes and subsequently ensures pathogen degradation by regulating pathogen-containing autophagosome maturation. May play a role in ruffle formation and actin cytoskeleton organization and seems to negatively regulate constitutive secretion. This is Calcium-binding and coiled-coil domain-containing protein 2 from Xenopus tropicalis (Western clawed frog).